The following is a 220-amino-acid chain: uncharacterized protein (220 aa).

This is an uncharacterized protein from Borreliella burgdorferi (strain ATCC 35210 / DSM 4680 / CIP 102532 / B31) (Borrelia burgdorferi).